The primary structure comprises 219 residues: MAEISAKMVQELREKTGAGMMDCKKALTEAGGDLAKAEEVLRKKGLSAAAKKTGRAATEGAVASYIHMGGKIGVLVEVNCETDFVARTEGFQGLVKEIAMQVAAASPRWVRREEVPADVVAKELEIAKAQAREQKKPEAILEKIATGKVEKFYSEFCLMEQAWVKDDKKKIQDVLTDAVAKIGENIQIRRFARFVLGEGLEKKQENLAEEVAKAAGLQK.

Residues 82–85 (TDFV) form an involved in Mg(2+) ion dislocation from EF-Tu region.

It belongs to the EF-Ts family.

It is found in the cytoplasm. In terms of biological role, associates with the EF-Tu.GDP complex and induces the exchange of GDP to GTP. It remains bound to the aminoacyl-tRNA.EF-Tu.GTP complex up to the GTP hydrolysis stage on the ribosome. The sequence is that of Elongation factor Ts from Anaeromyxobacter dehalogenans (strain 2CP-1 / ATCC BAA-258).